The following is a 184-amino-acid chain: Adenine phosphoribosyltransferase (184 aa).

Belongs to the purine/pyrimidine phosphoribosyltransferase family. As to quaternary structure, homodimer.

Its subcellular location is the cytoplasm. It catalyses the reaction AMP + diphosphate = 5-phospho-alpha-D-ribose 1-diphosphate + adenine. It functions in the pathway purine metabolism; AMP biosynthesis via salvage pathway; AMP from adenine: step 1/1. Functionally, catalyzes a salvage reaction resulting in the formation of AMP, that is energically less costly than de novo synthesis. This chain is Adenine phosphoribosyltransferase, found in Corynebacterium diphtheriae (strain ATCC 700971 / NCTC 13129 / Biotype gravis).